The primary structure comprises 61 residues: U-poneritoxin(01)-Om5a (61 aa).

The first 23 residues, 1–23 (MKLSALSLAFAIILMMTIMYTKA), serve as a signal peptide directing secretion. Residues 24-41 (DADASADAEADADAEAEA) constitute a propeptide that is removed on maturation. A Glutamine amide modification is found at Q59.

It belongs to the formicidae venom precursor-01 superfamily. In terms of processing, truncated sequences of this peptide have also been found in the venom. It is possible they have been cleaved in the venom. As to expression, expressed by the venom gland.

The protein localises to the secreted. In terms of biological role, acidic peptide with potent hemolytic activities (94.8% at 50 uM). It also shows low antimicrobial activities against E.coli (MIC=50uM), as well as histamine-releasing activity (28.3% at 10 uM). Does not have activity against S.aureus, and S.cerevisiae. In Odontomachus monticola (Trap-jaw ant), this protein is U-poneritoxin(01)-Om5a.